We begin with the raw amino-acid sequence, 598 residues long: Fumarate reductase flavoprotein subunit (598 aa).

Residues 12–16 (GAGGA), 36–38 (ISK), 44–52 (SHTVAAEGG), 156–158 (HFV), and D212 each bind FAD. H45 bears the Tele-8alpha-FAD histidine mark. Catalysis depends on residues H233 and R249. Residues 356 to 357 (HY), E380, and 391 to 397 (RLGSNSL) each bind FAD. The segment at 577–598 (AKRVYGGEADAQEKSDKEQANG) is disordered. Over residues 587 to 598 (AQEKSDKEQANG) the composition is skewed to basic and acidic residues.

The protein belongs to the FAD-dependent oxidoreductase 2 family. FRD/SDH subfamily. In terms of assembly, part of an enzyme complex containing four subunits: a flavoprotein (FrdA), an iron-sulfur protein (FrdB), and two hydrophobic anchor proteins (FrdC and FrdD). Interacts with SdhE. It depends on FAD as a cofactor.

It is found in the cell inner membrane. The enzyme catalyses a quinone + succinate = fumarate + a quinol. It catalyses the reaction a menaquinone + succinate = a menaquinol + fumarate. Its function is as follows. Two distinct, membrane-bound, FAD-containing enzymes are responsible for the catalysis of fumarate and succinate interconversion; the fumarate reductase is used in anaerobic growth, and the succinate dehydrogenase is used in aerobic growth. The protein is Fumarate reductase flavoprotein subunit of Serratia sp. (strain ATCC 39006) (Prodigiosinella confusarubida).